Here is a 487-residue protein sequence, read N- to C-terminus: MLKIAILGRPNVGKSSLFNRLCKRSLAIVNSQEGTTRDRLYGELHAFGVPAQVIDTGGVDHNSEDYFQKHIYNQALTGAKEADVLLLVIDIRCGITEEDAHLAKLLLPLKKPLILVANKADSRQEELQIHETYKLGIRDIVVTSTAHDKHIDTLLQRIKLVANLPEPREEEEEGLEELSVDEHEESEAALPSNTFPDFSEVFTEGFSPEEPCTIPESPQQAPKTLKIALIGRPNVGKSSIINGLLNEERCIIDNTPGTTRDNIDILYSHKDRQYLFIDTAGLRKMKSVKNSIEWISSSRTEKAISRADICLLVIDATQKLSSYEKRILSLISKRKKPHIILINKWDLLEEVRMEHYCKDLRATDPYLGQAKMLCISATTKRNLKKIFSAIDELHHVVSNKVPTPIVNKTLASALHRNHPQVIQGRRLRIYYAIQKTTTPLQFLLFINAKSLLTKHYEYYLKNTLKSSFNLYGIPFDLEFKEKPKRHN.

One can recognise an EngA-type G 1 domain in the interval 2 to 166; the sequence is LKIAILGRPN…RIKLVANLPE (165 aa). GTP is bound by residues 8-15, 55-59, and 118-121; these read GRPNVGKS, DTGGV, and NKAD. The segment at 165 to 194 is disordered; it reads PEPREEEEEGLEELSVDEHEESEAALPSNT. Residues 168-187 show a composition bias toward acidic residues; it reads REEEEEGLEELSVDEHEESE. The EngA-type G 2 domain occupies 225 to 398; sequence LKIALIGRPN…AIDELHHVVS (174 aa). Residues 231–238, 278–282, and 343–346 contribute to the GTP site; these read GRPNVGKS, DTAGL, and NKWD. Residues 399–483 form the KH-like domain; the sequence is NKVPTPIVNK…PFDLEFKEKP (85 aa).

Belongs to the TRAFAC class TrmE-Era-EngA-EngB-Septin-like GTPase superfamily. EngA (Der) GTPase family. As to quaternary structure, associates with the 50S ribosomal subunit.

In terms of biological role, GTPase that plays an essential role in the late steps of ribosome biogenesis. The chain is GTPase Der from Chlamydia pneumoniae (Chlamydophila pneumoniae).